Consider the following 524-residue polypeptide: Inosine-5'-monophosphate dehydrogenase 4 (524 aa).

CBS domains lie at 122 to 183 (FINS…VVSE) and 185 to 241 (MTKN…PLAS). S125 carries the phosphoserine modification. Residues 279–281 (DSS) and 329–331 (GMG) contribute to the NAD(+) site. Residues G331 and G333 each coordinate K(+). S334 is a binding site for IMP. C336 contacts K(+). Residue C336 is the Thioimidate intermediate of the active site. IMP is bound by residues 369–371 (DGG), 392–393 (GG), and 416–420 (YRGMG). R438 serves as the catalytic Proton acceptor. Residue Q450 coordinates IMP. K(+) is bound by residues E509, G510, and G511.

The protein belongs to the IMPDH/GMPR family. Homotetramer. Seems to be able to form heterotetramers composed from more than 1 of the 3 IMPDH gene products (IMD2-4). It depends on K(+) as a cofactor.

It localises to the cytoplasm. It carries out the reaction IMP + NAD(+) + H2O = XMP + NADH + H(+). It participates in purine metabolism; XMP biosynthesis via de novo pathway; XMP from IMP: step 1/1. Its activity is regulated as follows. Mycophenolic acid (MPA) is a non-competitive inhibitor that prevents formation of the closed enzyme conformation by binding to the same site as the amobile flap. In contrast, mizoribine monophosphate (MZP) is a competitive inhibitor that induces the closed conformation. MPA is a potent inhibitor of mammalian IMPDHs but a poor inhibitor of the bacterial enzymes. MZP is a more potent inhibitor of bacterial IMPDH. In terms of biological role, catalyzes the conversion of inosine 5'-phosphate (IMP) to xanthosine 5'-phosphate (XMP), the first committed and rate-limiting step in the de novo synthesis of guanine nucleotides, and therefore plays an important role in the regulation of cell growth. This Saccharomyces cerevisiae (strain ATCC 204508 / S288c) (Baker's yeast) protein is Inosine-5'-monophosphate dehydrogenase 4.